We begin with the raw amino-acid sequence, 523 residues long: Nuclear receptor ROR-alpha (523 aa).

Residues 1-26 (MESAPAAPDPAASEPGSSGADAAAGS) are compositionally biased toward low complexity. The segment at 1 to 63 (MESAPAAPDP…SRGISVTKKT (63 aa)) is disordered. At Lys-38 the chain carries N6-methyllysine. Polar residues predominate over residues 48-57 (QSYSSTSRGI). NR C4-type zinc fingers lie at residues 73–93 (CKICGDKSSGIHYGVITCEGC) and 109–133 (CPRQKNCLIDRTSRNRCQHCRLQKC). A DNA-binding region (nuclear receptor) is located at residues 73-138 (CKICGDKSSG…RLQKCLAVGM (66 aa)). Positions 154–183 (DSLYAEVQKHRMQQQQRDHQQQPGEAEPLT) are disordered. Position 183 is a phosphothreonine; by MAPK1 (Thr-183). Residue Lys-240 forms a Glycyl lysine isopeptide (Lys-Gly) (interchain with G-Cter in SUMO) linkage. An NR LBD domain is found at 272-510 (ELEHLAQNIS…LHFPPLYKEL (239 aa)). The AF-2 motif lies at 506–523 (LYKELFTSEFEPAMQIDG).

Belongs to the nuclear hormone receptor family. NR1 subfamily. Monomer. Interacts (via the DNA-binding domain) with HIF1A; the interaction enhances HIF1A transcription under hypoxia through increasing protein stability. Interacts with CEBPB; the interaction disrupts the interaction CEBPB:EP300. Interacts with the coactivators NCOA2, PPARGC1A (via LXXLL motif), EP300 and MED1. Interacts with the corepressor NCOR1. Interacts with MAGED1 and CTNNB1. Interacts with CRY1 and PER2. Interacts (via AF-2 motif) with PROX1. Interacts with NRIP1. Isoform 4 interacts (via AF-2 motif) with isoform 1 of FOXP3 (via LXXLL motif). Phosphorylation by conventional PKCs in neurons inhibits transcriptional activity. Phosphorylated on Thr-183 by MAPK1/ERK1 in vitro. Post-translationally, sumoylated by SENP1 and SENP2. Sumoylation, promoted by PIAS2, PIAS3, PIAS4 but not PIAS1, enhances the transcriptional activity. Desumoylated by SENP1. In terms of processing, ubiquitinated, leading to its degradation by the proteasome. Proteasomal degradation is required for efficient transcriptional activity and is prevented by HR. Monomethylated at Lys-38 by EZH2, this creates a degron recognized by a DCX (DDB1-DCAF1/VPRBP-CUL4A-RBX1) E3 ubiquitin ligase complex. In terms of tissue distribution, widely expressed in a number of tissues. Expressed in both regulatory T-cells (Treg) and effector T-cells (Teff). Isoform 4: Highly expressed in the central nervous system, including in the cerebellum.

The protein localises to the nucleus. In terms of biological role, nuclear receptor that binds DNA as a monomer to ROR response elements (RORE) containing a single core motif half-site 5'-AGGTCA-3' preceded by a short A-T-rich sequence. Key regulator of embryonic development, cellular differentiation, immunity, circadian rhythm as well as lipid, steroid, xenobiotics and glucose metabolism. Considered to have intrinsic transcriptional activity, have some natural ligands like oxysterols that act as agonists (25-hydroxycholesterol) or inverse agonists (7-oxygenated sterols), enhancing or repressing the transcriptional activity, respectively. Recruits distinct combinations of cofactors to target genes regulatory regions to modulate their transcriptional expression, depending on the tissue, time and promoter contexts. Regulates genes involved in photoreceptor development including OPN1SW, OPN1SM and ARR3 and skeletal muscle development with MYOD1. Required for proper cerebellum development. Regulates SHH gene expression, among others, to induce granule cells proliferation as well as expression of genes involved in calcium-mediated signal transduction. Regulates the circadian expression of several clock genes, including CLOCK, BMAL1, NPAS2 and CRY1. Competes with NR1D1 for binding to their shared DNA response element on some clock genes such as BMAL1, CRY1 and NR1D1 itself, resulting in NR1D1-mediated repression or RORA-mediated activation of clock genes expression, leading to the circadian pattern of clock genes expression. Therefore influences the period length and stability of the clock. Regulates genes involved in lipid metabolism such as apolipoproteins APOA1, APOA5, APOC3 and PPARG. In liver, has specific and redundant functions with RORC as positive or negative modulator of expression of genes encoding phase I and phase II proteins involved in the metabolism of lipids, steroids and xenobiotics, such as CYP7B1 and SULT2A1. Induces a rhythmic expression of some of these genes. In addition, interplays functionally with NR1H2 and NR1H3 for the regulation of genes involved in cholesterol metabolism. Also involved in the regulation of hepatic glucose metabolism through the modulation of G6PC1 and PCK1. In adipose tissue, plays a role as negative regulator of adipocyte differentiation, probably acting through dual mechanisms. May suppress CEBPB-dependent adipogenesis through direct interaction and PPARG-dependent adipogenesis through competition for DNA-binding. Downstream of IL6 and TGFB and synergistically with RORC isoform 2, is implicated in the lineage specification of uncommitted CD4(+) T-helper (T(H)) cells into T(H)17 cells, antagonizing the T(H)1 program. Probably regulates IL17 and IL17F expression on T(H) by binding to the essential enhancer conserved non-coding sequence 2 (CNS2) in the IL17-IL17F locus. Involved in hypoxia signaling by interacting with and activating the transcriptional activity of HIF1A. May inhibit cell growth in response to cellular stress. May exert an anti-inflammatory role by inducing CHUK expression and inhibiting NF-kappa-B signaling. In Homo sapiens (Human), this protein is Nuclear receptor ROR-alpha (RORA).